Consider the following 327-residue polypeptide: Annexin A8-like protein 1 (327 aa).

Annexin repeat units follow at residues 21–92 (FNPD…ALMY), 93–164 (PPYR…CLLQ), 177–249 (ALAL…TVVK), and 253–324 (NLHS…SLVG). Ca(2+) contacts are provided by methionine 266, glycine 268, glycine 270, and aspartate 310.

Belongs to the annexin family.

This Homo sapiens (Human) protein is Annexin A8-like protein 1.